The chain runs to 117 residues: Large ribosomal subunit protein bL20 (117 aa).

The protein belongs to the bacterial ribosomal protein bL20 family.

Functionally, binds directly to 23S ribosomal RNA and is necessary for the in vitro assembly process of the 50S ribosomal subunit. It is not involved in the protein synthesizing functions of that subunit. This chain is Large ribosomal subunit protein bL20, found in Solidesulfovibrio magneticus (strain ATCC 700980 / DSM 13731 / RS-1) (Desulfovibrio magneticus).